A 317-amino-acid polypeptide reads, in one-letter code: Petrobactin-binding protein YclQ (317 aa).

Positions 1–19 (MKKFALLFIALVTAVVISA) are cleaved as a signal peptide. Cysteine 20 carries N-palmitoyl cysteine lipidation. A lipid anchor (S-diacylglycerol cysteine) is attached at cysteine 20. The Fe/B12 periplasmic-binding domain occupies 56–317 (KVVVFDFGSL…IKEVKDGLEK (262 aa)).

Belongs to the bacterial solute-binding protein 8 family. As to quaternary structure, the complex is composed of two ATP-binding proteins (YclP), two transmembrane proteins (YclN and YclO) and a solute-binding protein (YclQ). Interacts with FloT.

Its subcellular location is the cell membrane. The protein localises to the membrane raft. Part of the ABC transporter complex YclNOPQ involved in uptake of ferric-petrobactin. Petrobactin is a photoreactive 3,4-catecholate siderophore produced by many members of the B.cereus group, including B.anthracis. Binds selectively iron-free and ferric petrobactin and the petrobactin precursor 3,4-dihydroxybenzoic acid (3,4-DHB). The chain is Petrobactin-binding protein YclQ (yclQ) from Bacillus subtilis (strain 168).